A 190-amino-acid chain; its full sequence is Bifunctional protein PyrR (190 aa).

A PRPP-binding motif is present at residues 112 to 124; it reads VILVDDVLYSGRS.

This sequence belongs to the purine/pyrimidine phosphoribosyltransferase family. PyrR subfamily.

It catalyses the reaction UMP + diphosphate = 5-phospho-alpha-D-ribose 1-diphosphate + uracil. In terms of biological role, regulates the transcription of the pyrimidine nucleotide (pyr) operon in response to exogenous pyrimidines. Also displays a weak uracil phosphoribosyltransferase activity which is not physiologically significant. In Mycolicibacterium paratuberculosis (strain ATCC BAA-968 / K-10) (Mycobacterium paratuberculosis), this protein is Bifunctional protein PyrR.